We begin with the raw amino-acid sequence, 117 residues long: Small ribosomal subunit protein bS6 (117 aa).

Belongs to the bacterial ribosomal protein bS6 family.

In terms of biological role, binds together with bS18 to 16S ribosomal RNA. This chain is Small ribosomal subunit protein bS6, found in Trichodesmium erythraeum (strain IMS101).